The chain runs to 274 residues: DegV domain-containing protein Cgl2349/cg2579 (274 aa).

Residues 3–259 (VRVIVDSSAC…PGAVSVSAVF (257 aa)) form the DegV domain. Hexadecanoate-binding residues include T39 and S73.

In terms of assembly, monomer.

In terms of biological role, binds long-chain fatty acids, such as palmitate, and may play a role in lipid transport or fatty acid metabolism. This chain is DegV domain-containing protein Cgl2349/cg2579, found in Corynebacterium glutamicum (strain ATCC 13032 / DSM 20300 / JCM 1318 / BCRC 11384 / CCUG 27702 / LMG 3730 / NBRC 12168 / NCIMB 10025 / NRRL B-2784 / 534).